Here is a 217-residue protein sequence, read N- to C-terminus: Pyridoxine/pyridoxamine 5'-phosphate oxidase (217 aa).

Residues 14–17 and Lys-72 contribute to the substrate site; that span reads RKSY. FMN-binding positions include 67–72, 82–83, Arg-88, and Lys-89; these read RVVLIK and YT. Residues Tyr-129, Arg-133, and Ser-137 each coordinate substrate. FMN-binding positions include 146–147 and Trp-190; that span reads QS. Substrate is bound at residue 196–198; sequence RLH. FMN is bound at residue Arg-200.

It belongs to the pyridoxamine 5'-phosphate oxidase family. Homodimer. FMN serves as cofactor.

It catalyses the reaction pyridoxamine 5'-phosphate + O2 + H2O = pyridoxal 5'-phosphate + H2O2 + NH4(+). It carries out the reaction pyridoxine 5'-phosphate + O2 = pyridoxal 5'-phosphate + H2O2. The protein operates within cofactor metabolism; pyridoxal 5'-phosphate salvage; pyridoxal 5'-phosphate from pyridoxamine 5'-phosphate: step 1/1. Its pathway is cofactor metabolism; pyridoxal 5'-phosphate salvage; pyridoxal 5'-phosphate from pyridoxine 5'-phosphate: step 1/1. In terms of biological role, catalyzes the oxidation of either pyridoxine 5'-phosphate (PNP) or pyridoxamine 5'-phosphate (PMP) into pyridoxal 5'-phosphate (PLP). This Acidovorax sp. (strain JS42) protein is Pyridoxine/pyridoxamine 5'-phosphate oxidase.